Reading from the N-terminus, the 239-residue chain is tRNA (guanine-N(7)-)-methyltransferase (239 aa).

S-adenosyl-L-methionine-binding residues include glutamate 69, glutamate 94, aspartate 121, and aspartate 144. Residue aspartate 144 is part of the active site. Lysine 148 contacts substrate. Residues 150–155 (RHNKRR) are interaction with RNA. Substrate contacts are provided by residues aspartate 180 and 217 to 220 (TKFE).

The protein belongs to the class I-like SAM-binding methyltransferase superfamily. TrmB family. In terms of assembly, monomer.

It carries out the reaction guanosine(46) in tRNA + S-adenosyl-L-methionine = N(7)-methylguanosine(46) in tRNA + S-adenosyl-L-homocysteine. The protein operates within tRNA modification; N(7)-methylguanine-tRNA biosynthesis. Functionally, catalyzes the formation of N(7)-methylguanine at position 46 (m7G46) in tRNA. This is tRNA (guanine-N(7)-)-methyltransferase from Salmonella choleraesuis (strain SC-B67).